Here is a 104-residue protein sequence, read N- to C-terminus: Pole-localizer protein TmaR (104 aa).

Coiled-coil stretches lie at residues 7 to 34 (IVNQARRKNKLKRELLDNEKKVRDNRKR) and 76 to 96 (SAEISKARRDISRRIRELTEE).

Belongs to the pole-localizer TmaR family.

It localises to the cytoplasm. In terms of biological role, pole-localizer protein involved in the regulation of several cellular processes. The protein is Pole-localizer protein TmaR of Vibrio atlanticus (strain LGP32) (Vibrio splendidus (strain Mel32)).